The sequence spans 363 residues: Protein TAX-1 (363 aa).

Positions 129-363 (RYGNAEEILS…IPFRGVAAEQ (235 aa)) are required for localization to the flagellum and for flagellar motility. 2 TPR repeats span residues 157–190 (AELH…LSVM) and 199–232 (TFAY…WLKH).

Interacts with TTC29.

The protein localises to the cytoplasm. Its subcellular location is the cytoskeleton. The protein resides in the flagellum axoneme. Functionally, required for flagellum motility. This chain is Protein TAX-1, found in Trypanosoma brucei brucei (strain 927/4 GUTat10.1).